We begin with the raw amino-acid sequence, 159 residues long: Small ribosomal subunit protein uS9 (159 aa).

This sequence belongs to the universal ribosomal protein uS9 family.

The sequence is that of Small ribosomal subunit protein uS9 from Rickettsia conorii (strain ATCC VR-613 / Malish 7).